We begin with the raw amino-acid sequence, 59 residues long: MAVQQNKKSPSKRGMHRSHDFLRTTPLSVDPGTGEVHLRHHISPNGYYRGKKVIKTKED.

The segment at 1-40 (MAVQQNKKSPSKRGMHRSHDFLRTTPLSVDPGTGEVHLRH) is disordered.

Belongs to the bacterial ribosomal protein bL32 family.

In Nitrosospira multiformis (strain ATCC 25196 / NCIMB 11849 / C 71), this protein is Large ribosomal subunit protein bL32.